Here is a 282-residue protein sequence, read N- to C-terminus: Aquaporin PIP-type (282 aa).

2 helical membrane-spanning segments follow: residues 39-61 and 74-96; these read WRAA…ATVI and GLLG…TAGI. The NPA 1 motif lies at 102–104; that stretch reads NPA. The next 4 membrane-spanning stretches (helical) occupy residues 116–138, 159–181, 201–223, and 243–265; these read SLLR…VGLV, GYNK…YTVF, LPIG…TGIN, and HWIF…QYVL. An NPA 2 motif is present at residues 223 to 225; that stretch reads NPA.

This sequence belongs to the MIP/aquaporin (TC 1.A.8) family. PIP (TC 1.A.8.11) subfamily.

It is found in the membrane. In terms of biological role, water-specific channel. The chain is Aquaporin PIP-type from Atriplex canescens (Fourwing saltbush).